The chain runs to 615 residues: 1-deoxy-D-xylulose-5-phosphate synthase (615 aa).

Thiamine diphosphate-binding positions include His-76 and 117 to 119 (GHS). Asp-148 lines the Mg(2+) pocket. Thiamine diphosphate-binding positions include 149-150 (GA), Asn-177, Tyr-284, and Glu-365. Position 177 (Asn-177) interacts with Mg(2+).

The protein belongs to the transketolase family. DXPS subfamily. As to quaternary structure, homodimer. It depends on Mg(2+) as a cofactor. The cofactor is thiamine diphosphate.

The enzyme catalyses D-glyceraldehyde 3-phosphate + pyruvate + H(+) = 1-deoxy-D-xylulose 5-phosphate + CO2. It functions in the pathway metabolic intermediate biosynthesis; 1-deoxy-D-xylulose 5-phosphate biosynthesis; 1-deoxy-D-xylulose 5-phosphate from D-glyceraldehyde 3-phosphate and pyruvate: step 1/1. Functionally, catalyzes the acyloin condensation reaction between C atoms 2 and 3 of pyruvate and glyceraldehyde 3-phosphate to yield 1-deoxy-D-xylulose-5-phosphate (DXP). The polypeptide is 1-deoxy-D-xylulose-5-phosphate synthase (Francisella tularensis subsp. novicida (strain U112)).